The primary structure comprises 343 residues: Allergin-1 (343 aa).

The N-terminal stretch at 1-19 (MWSHLNRLLFWSIFSSVTC) is a signal peptide. Topologically, residues 20–227 (RKAVLDCEAM…GGDSCPFCLK (208 aa)) are extracellular. 2 Ig-like C2-type domains span residues 35 to 118 (PSPC…RDFS) and 128 to 213 (PVLN…HPVT). N-linked (GlcNAc...) asparagine glycosylation is found at Asn51, Asn60, Asn89, Asn151, Asn157, and Asn182. Disulfide bonds link Cys56–Cys103 and Cys147–Cys196. Residues 228–248 (LLLPGLLLLLVVIILILAFWV) traverse the membrane as a helical segment. The Cytoplasmic portion of the chain corresponds to 249-343 (LPKYKTRKAM…SGYVYSELNF (95 aa)). 2 consecutive short sequence motifs (ITIM motif) follow at residues 311–316 (LQYATP) and 336–341 (YVYSEL). Phosphotyrosine is present on residues Tyr313 and Tyr338.

Monomer. Interacts (tyrosine-phosphorylated) with PTPN6, PTPN11 and INPP5D. N-glycosylated. Expressed in myeloid cells (dendritic cells, macrophages and neutrophils, weak expression on B-cells but not in T-cells or natural killer cells), peripheral blood basophils and mast cells (at protein level).

It is found in the cell membrane. Functionally, immunoglobulin-like receptor which plays an inhibitory role in degranulation of mast cells. Negatively regulates IgE-mediated mast cell activation and suppresses the type I immediate hypersensitivity reaction. The protein is Allergin-1 (MILR1) of Homo sapiens (Human).